A 390-amino-acid chain; its full sequence is Terminal nucleotidyltransferase 5C (390 aa).

This sequence belongs to the TENT family.

It localises to the nucleus. The protein resides in the cytoplasm. The protein localises to the cytoskeleton. It is found in the microtubule organizing center. Its subcellular location is the centrosome. The enzyme catalyses RNA(n) + ATP = RNA(n)-3'-adenine ribonucleotide + diphosphate. Functionally, catalyzes the transfer of one adenosine molecule from an ATP to an mRNA poly(A) tail bearing a 3'-OH terminal group and enhances mRNA stability and gene expression. The protein is Terminal nucleotidyltransferase 5C of Gallus gallus (Chicken).